The primary structure comprises 135 residues: MKRLLSWLTGALVMASLMAGLVMPSSVYADDDLRNKYSGNEIRNIADDKIAARDGKVDLNNSSVRRFQQFPGMYPTMAGKIVLGGPYDSVDDVLSLDLTERQQELFAKYRDNFTVTPPSIALNEGDDRINDGQYR.

Residues 1 to 29 (MKRLLSWLTGALVMASLMAGLVMPSSVYA) form the signal peptide.

This sequence belongs to the PsbU family. In terms of assembly, PSII is composed of 1 copy each of membrane proteins PsbA, PsbB, PsbC, PsbD, PsbE, PsbF, PsbH, PsbI, PsbJ, PsbK, PsbL, PsbM, PsbT, PsbX, PsbY, PsbZ, Psb30/Ycf12, peripheral proteins PsbO, CyanoQ (PsbQ), PsbU, PsbV and a large number of cofactors. It forms dimeric complexes.

The protein localises to the cellular thylakoid membrane. Its function is as follows. One of the extrinsic, lumenal subunits of photosystem II (PSII). PSII is a light-driven water plastoquinone oxidoreductase, using light energy to abstract electrons from H(2)O, generating a proton gradient subsequently used for ATP formation. The extrinsic proteins stabilize the structure of photosystem II oxygen-evolving complex (OEC), the ion environment of oxygen evolution and protect the OEC against heat-induced inactivation. This is Photosystem II extrinsic protein U from Synechococcus sp. (strain CC9605).